The primary structure comprises 123 residues: MTDQTSLQYTAEHEWVLIDGDVATVGITSYAADKLGDVVFVELPAVGDELAGGSVVGEIESTKSVGELFAPIDGTVTEVNDDVVASPDLVNSDPFGAGWLVKVRFEALPTLLSHDEYVALVGE.

In terms of domain architecture, Lipoyl-binding spans 22-104 (VATVGITSYA…FGAGWLVKVR (83 aa)). Lysine 63 carries the N6-lipoyllysine modification.

It belongs to the GcvH family. The glycine cleavage system is composed of four proteins: P, T, L and H. Requires (R)-lipoate as cofactor.

Its function is as follows. The glycine cleavage system catalyzes the degradation of glycine. The H protein shuttles the methylamine group of glycine from the P protein to the T protein. This chain is Glycine cleavage system H protein, found in Clavibacter sepedonicus (Clavibacter michiganensis subsp. sepedonicus).